The primary structure comprises 252 residues: Probable transcriptional regulatory protein Lxx10750 (252 aa).

This sequence belongs to the TACO1 family.

The protein localises to the cytoplasm. The polypeptide is Probable transcriptional regulatory protein Lxx10750 (Leifsonia xyli subsp. xyli (strain CTCB07)).